The chain runs to 238 residues: Mitochondrial inner membrane protease atp23 (238 aa).

An a divalent metal cation-binding site is contributed by His137. Glu138 is a catalytic residue. An a divalent metal cation-binding site is contributed by His141.

This sequence belongs to the peptidase M76 family.

Its subcellular location is the mitochondrion inner membrane. In terms of biological role, has a dual role in the assembly of mitochondrial ATPase. Acts as a protease that removes N-terminal residues of mitochondrial ATPase CF(0) subunit 6 at the intermembrane space side. Also involved in the correct assembly of the membrane-embedded ATPase CF(0) particle, probably mediating association of subunit 6 with the subunit 9 ring. The protein is Mitochondrial inner membrane protease atp23 (atp23) of Aspergillus oryzae (strain ATCC 42149 / RIB 40) (Yellow koji mold).